The chain runs to 443 residues: Tubulin beta-1 chain (443 aa).

GTP is bound by residues Gln-11, Glu-69, Ser-138, Gly-142, Thr-143, Gly-144, Asn-204, and Asn-226. Residue Glu-69 participates in Mg(2+) binding. A disordered region spans residues Gln-424 to Ala-443. A compositionally biased stretch (acidic residues) spans Gly-434–Ala-443.

It belongs to the tubulin family. In terms of assembly, dimer of alpha and beta chains. A typical microtubule is a hollow water-filled tube with an outer diameter of 25 nm and an inner diameter of 15 nM. Alpha-beta heterodimers associate head-to-tail to form protofilaments running lengthwise along the microtubule wall with the beta-tubulin subunit facing the microtubule plus end conferring a structural polarity. Microtubules usually have 13 protofilaments but different protofilament numbers can be found in some organisms and specialized cells. Requires Mg(2+) as cofactor.

It is found in the cytoplasm. The protein localises to the cytoskeleton. In terms of biological role, tubulin is the major constituent of microtubules, a cylinder consisting of laterally associated linear protofilaments composed of alpha- and beta-tubulin heterodimers. Microtubules grow by the addition of GTP-tubulin dimers to the microtubule end, where a stabilizing cap forms. Below the cap, tubulin dimers are in GDP-bound state, owing to GTPase activity of alpha-tubulin. In Anemia phyllitidis (Fern), this protein is Tubulin beta-1 chain (TUBB1).